The sequence spans 85 residues: Large ribosomal subunit protein bL27 (85 aa).

Residues 1–22 (MAHKKAGGSTRNGRDSESKRLG) are disordered.

It belongs to the bacterial ribosomal protein bL27 family.

The chain is Large ribosomal subunit protein bL27 from Aliivibrio salmonicida (strain LFI1238) (Vibrio salmonicida (strain LFI1238)).